Reading from the N-terminus, the 422-residue chain is L-2-hydroxyglutarate dehydrogenase (422 aa).

It belongs to the L2HGDH family. FAD is required as a cofactor.

The protein localises to the cell inner membrane. The catalysed reaction is (S)-2-hydroxyglutarate + a quinone = a quinol + 2-oxoglutarate. It participates in amino-acid degradation. In terms of biological role, catalyzes the dehydrogenation of L-2-hydroxyglutarate (L2HG) to alpha-ketoglutarate and couples to the respiratory chain by feeding electrons from the reaction into the membrane quinone pool. Functions in a L-lysine degradation pathway that proceeds via cadaverine, glutarate and L-2-hydroxyglutarate. Also displays some oxidase activity in vitro on L-2-hydroxyglutarate with O2 as the electron acceptor, but this activity is most likely not physiological. The sequence is that of L-2-hydroxyglutarate dehydrogenase from Salmonella houtenae.